The sequence spans 406 residues: Ribonuclease D (406 aa).

The 3'-5' exonuclease domain occupies 26 to 193 (LITQTTDLEI…VYLLLKKQLE (168 aa)). One can recognise an HRDC domain in the interval 231-312 (KPRELAVLQK…HEGLEVDLAT (82 aa)).

Belongs to the RNase D family. The cofactor is a divalent metal cation.

It is found in the cytoplasm. It catalyses the reaction Exonucleolytic cleavage that removes extra residues from the 3'-terminus of tRNA to produce 5'-mononucleotides.. Exonuclease involved in the 3' processing of various precursor tRNAs. Initiates hydrolysis at the 3'-terminus of an RNA molecule and releases 5'-mononucleotides. The protein is Ribonuclease D of Bartonella henselae (strain ATCC 49882 / DSM 28221 / CCUG 30454 / Houston 1) (Rochalimaea henselae).